A 978-amino-acid chain; its full sequence is Macrophage colony-stimulating factor 1 receptor (978 aa).

The N-terminal stretch at 1–19 (MELGPPLVLLLATVWHGQG) is a signal peptide. Topologically, residues 20–515 (APVIEPSGPE…QLPDESLFTP (496 aa)) are extracellular. Ig-like C2-type domains follow at residues 24 to 104 (EPSG…VKDP), 107 to 197 (SWNL…KVNR), 204 to 298 (QIKL…VVES), 299 to 397 (AYLN…LTLR), and 398 to 503 (YPPE…SLGQ). Cystine bridges form between cysteine 42–cysteine 84, cysteine 127–cysteine 177, and cysteine 224–cysteine 278. N-linked (GlcNAc...) asparagine glycans are attached at residues asparagine 45 and asparagine 73. Asparagine 302, asparagine 335, asparagine 389, asparagine 410, asparagine 449, asparagine 478, and asparagine 491 each carry an N-linked (GlcNAc...) asparagine glycan. Cysteine 417 and cysteine 483 are disulfide-bonded. The helical transmembrane segment at 516–536 (VVVACMSVMSLLVLLLLLLLY) threads the bilayer. Residues 537–978 (KYKQKPKYQV…LQPNNYQFAC (442 aa)) lie on the Cytoplasmic side of the membrane. The tract at residues 540–572 (QKPKYQVRWKIIERYEGNSYTFIDPTQLPYNEK) is regulatory juxtamembrane domain. 2 positions are modified to phosphotyrosine; by autocatalysis: tyrosine 544 and tyrosine 559. Residues 580–914 (LQFGKTLGAG…CFLLQEQARL (335 aa)) form the Protein kinase domain. ATP contacts are provided by residues 586-594 (LGAGAFGKV) and lysine 614. Phosphotyrosine; by autocatalysis occurs at positions 697 and 706. Serine 711 carries the post-translational modification Phosphoserine. Tyrosine 721 carries the post-translational modification Phosphotyrosine; by autocatalysis. Aspartate 776 functions as the Proton acceptor in the catalytic mechanism. The interval 794–816 (DFGLARDIMNDSNYVVKGNARLP) is activation loop. Phosphotyrosine; by autocatalysis occurs at positions 807 and 921. The interval 921-957 (YANLPSSGGSSGSDSGGGSSGGSSSEPEEESSSEHLA) is disordered. Residues 929 to 941 (GSSGSDSGGGSSG) are compositionally biased toward gly residues. Tyrosine 974 is modified (phosphotyrosine; by autocatalysis).

Belongs to the protein kinase superfamily. Tyr protein kinase family. CSF-1/PDGF receptor subfamily. As to quaternary structure, monomer. Homodimer. Interacts with CSF1 and IL34. Interaction with dimeric CSF1 or IL34 leads to receptor homodimerization. Interacts with INPPL1/SHIP2 and THOC5. Interacts (tyrosine phosphorylated) with PLCG2 (via SH2 domain). Interacts (tyrosine phosphorylated) with PIK3R1 (via SH2 domain). Interacts (tyrosine phosphorylated) with FYN, YES1 and SRC (via SH2 domain). Interacts (tyrosine phosphorylated) with CBL, GRB2 and SLA2. Post-translationally, autophosphorylated in response to CSF1 or IL34 binding. Phosphorylation at Tyr-559 is important for normal down-regulation of signaling by ubiquitination, internalization and degradation. Phosphorylation at Tyr-559 and Tyr-807 is important for interaction with SRC family members, including FYN, YES1 and SRC, and for subsequent activation of these protein kinases. Phosphorylation at Tyr-697 and Tyr-921 is important for interaction with GRB2. Phosphorylation at Tyr-721 is important for interaction with PIK3R1. Phosphorylation at Tyr-721 and Tyr-807 is important for interaction with PLCG2. Phosphorylation at Tyr-974 is important for interaction with CBL. Dephosphorylation by PTPN2 negatively regulates downstream signaling and macrophage differentiation. Ubiquitinated. Becomes rapidly polyubiquitinated after autophosphorylation, leading to its degradation.

It localises to the cell membrane. It catalyses the reaction L-tyrosyl-[protein] + ATP = O-phospho-L-tyrosyl-[protein] + ADP + H(+). Present in an inactive conformation in the absence of bound ligand. CSF1 or IL34 binding leads to dimerization and activation by autophosphorylation on tyrosine residues. Functionally, tyrosine-protein kinase that acts as a cell-surface receptor for CSF1 and IL34 and plays an essential role in the regulation of survival, proliferation and differentiation of hematopoietic precursor cells, especially mononuclear phagocytes, such as macrophages and monocytes. Promotes the release of pro-inflammatory chemokines in response to IL34 and CSF1, and thereby plays an important role in innate immunity and in inflammatory processes. Plays an important role in the regulation of osteoclast proliferation and differentiation, the regulation of bone resorption, and is required for normal bone and tooth development. Required for normal male and female fertility, and for normal development of milk ducts and acinar structures in the mammary gland during pregnancy. Promotes reorganization of the actin cytoskeleton, regulates formation of membrane ruffles, cell adhesion and cell migration, and promotes cancer cell invasion. Activates several signaling pathways in response to ligand binding, including the ERK1/2 and the JNK pathway. Phosphorylates PIK3R1, PLCG2, GRB2, SLA2 and CBL. Activation of PLCG2 leads to the production of the cellular signaling molecules diacylglycerol and inositol 1,4,5-trisphosphate, that then lead to the activation of protein kinase C family members, especially PRKCD. Phosphorylation of PIK3R1, the regulatory subunit of phosphatidylinositol 3-kinase, leads to activation of the AKT1 signaling pathway. Activated CSF1R also mediates activation of the MAP kinases MAPK1/ERK2 and/or MAPK3/ERK1, and of the SRC family kinases SRC, FYN and YES1. Activated CSF1R transmits signals both via proteins that directly interact with phosphorylated tyrosine residues in its intracellular domain, or via adapter proteins, such as GRB2. Promotes activation of STAT family members STAT3, STAT5A and/or STAT5B. Promotes tyrosine phosphorylation of SHC1 and INPP5D/SHIP-1. Receptor signaling is down-regulated by protein phosphatases, such as INPP5D/SHIP-1, that dephosphorylate the receptor and its downstream effectors, and by rapid internalization of the activated receptor. In the central nervous system, may play a role in the development of microglia macrophages. This chain is Macrophage colony-stimulating factor 1 receptor (Csf1r), found in Rattus norvegicus (Rat).